The chain runs to 1182 residues: Rho GTPase-activating protein 20 (1182 aa).

The tract at residues 1-40 (MEAMSPQQDALGAQPGRSSSLTGMSRIAGGPGTKKKMKTL) is disordered. Position 46 is a phosphoserine (S46). Positions 85-185 (TLLIDGPVEL…WLSLLQRYIA (101 aa)) constitute a PH domain. Residues 194–283 (KSIPLKIFAK…TALLTQGSRD (90 aa)) form the Ras-associating domain. In terms of domain architecture, Rho-GAP spans 365-551 (VSLPDLCEND…FLIENCCRVF (187 aa)). Phosphoserine occurs at positions 704 and 730. 6 disordered regions span residues 745–772 (QTQP…KRNT), 803–839 (VASY…QKSS), 935–955 (SYSS…SSQD), 982–1011 (TQRK…GQAS), 1074–1101 (LPSC…EGPG), and 1142–1182 (SGGQ…GTDI). Over residues 758-772 (KQSSVTGTDVSKRNT) the composition is skewed to polar residues. The span at 811 to 824 (SQDHPRKQAFDADP) shows a compositional bias: basic and acidic residues.

GTPase activator for the Rho-type GTPases by converting them to an inactive GDP-bound state. This Mus musculus (Mouse) protein is Rho GTPase-activating protein 20 (Arhgap20).